We begin with the raw amino-acid sequence, 509 residues long: Light-independent protochlorophyllide reductase subunit B (509 aa).

[4Fe-4S] cluster is bound at residue Asp36. Asp295 functions as the Proton donor in the catalytic mechanism. Residue 430-431 participates in substrate binding; that stretch reads GM.

The protein belongs to the ChlB/BchB/BchZ family. In terms of assembly, protochlorophyllide reductase is composed of three subunits; ChlL, ChlN and ChlB. Forms a heterotetramer of two ChlB and two ChlN subunits. It depends on [4Fe-4S] cluster as a cofactor.

It is found in the plastid. The protein localises to the chloroplast. The enzyme catalyses chlorophyllide a + oxidized 2[4Fe-4S]-[ferredoxin] + 2 ADP + 2 phosphate = protochlorophyllide a + reduced 2[4Fe-4S]-[ferredoxin] + 2 ATP + 2 H2O. The protein operates within porphyrin-containing compound metabolism; chlorophyll biosynthesis (light-independent). Functionally, component of the dark-operative protochlorophyllide reductase (DPOR) that uses Mg-ATP and reduced ferredoxin to reduce ring D of protochlorophyllide (Pchlide) to form chlorophyllide a (Chlide). This reaction is light-independent. The NB-protein (ChlN-ChlB) is the catalytic component of the complex. This is Light-independent protochlorophyllide reductase subunit B from Mesostigma viride (Green alga).